The primary structure comprises 994 residues: Cation-chloride cotransporter 2 (994 aa).

Residues 1–28 form a disordered region; the sequence is MERGGFGGAGRHDEEAPAMRPAPQQRYR. Topologically, residues 1-139 are cytoplasmic; the sequence is MERGGFGGAG…GHPKETETKL (139 aa). The helical transmembrane segment at 140 to 160 threads the bilayer; that stretch reads DTMMGVFVPCLQNILGIIYYI. The Extracellular segment spans residues 161–174; that stretch reads RFTWIVGMGGVWQS. A helical membrane pass occupies residues 175–195; that stretch reads LVLVAFCGSCTFLTTISLSAI. The Cytoplasmic segment spans residues 196-221; it reads ATNGAMKGGGPYYLIGRALGPEVGVS. Residues 222-242 traverse the membrane as a helical segment; sequence IGLCFFLGNAVAGAMYVLGAV. Residues 243–287 are Extracellular-facing; sequence ETFLDAVPSAEFFQESVTVVTNTFVNGTAAGNATTISTPNLHDLQ. 2 N-linked (GlcNAc...) asparagine glycosylation sites follow: Asn-268 and Asn-274. A helical transmembrane segment spans residues 288–308; that stretch reads VYGIIVTILLCFIVFGGVKII. Residues 309–311 are Cytoplasmic-facing; it reads NKV. A helical membrane pass occupies residues 312 to 332; it reads APAFLIPVLFSILCIYIGVFI. Over 333–372 the chain is Extracellular; that stretch reads APRPNASKWITGLSITTLKDNWSSDYQRTNNAGVPDPNGS. N-linked (GlcNAc...) asparagine glycosylation is found at Asn-337, Asn-353, and Asn-370. Residues 373–393 form a helical membrane-spanning segment; sequence IYWDFNALLGLYFPAVTGIMA. The Cytoplasmic portion of the chain corresponds to 394–412; the sequence is GSNRSASLKDTQRSIPIGT. Residues 413–433 form a helical membrane-spanning segment; the sequence is LHATISTTMMYLLSVFLFGAL. Residues 434–448 lie on the Extracellular side of the membrane; sequence STREGLLTDRLLCAA. Residues 449-469 form a helical membrane-spanning segment; that stretch reads VAWPSPAVVYAGIILSTLGAA. At 470–505 the chain is on the cytoplasmic side; sequence LQSLTGAPRLLAAIANDDILPVLNYFKAYEGSEPHV. A helical membrane pass occupies residues 506-526; the sequence is ATLFTSFICISCVIIGNLDVI. At 527–529 the chain is on the extracellular side; that stretch reads TPT. The helical transmembrane segment at 530–552 threads the bilayer; that stretch reads ITMFFLLCYAGVNLSCFLLDLLD. The Cytoplasmic portion of the chain corresponds to 553–558; that stretch reads APSWRP. Residues 559–579 traverse the membrane as a helical segment; the sequence is RWKLHHWSLSLIGALLCIVIM. Topologically, residues 580–585 are extracellular; the sequence is FMISWT. Residues 586–606 form a helical membrane-spanning segment; sequence FTVVSLALASLIYYYVSLKGK. The Cytoplasmic segment spans residues 607 to 994; the sequence is AGDWGDGFKS…YRRDVVTLFT (388 aa).

Belongs to the SLC12A transporter family.

It is found in the membrane. Its function is as follows. Probable cation/chloride cotransporter. The chain is Cation-chloride cotransporter 2 (CCC2) from Oryza sativa subsp. japonica (Rice).